The following is a 188-amino-acid chain: Elongation factor P-like protein (188 aa).

Belongs to the elongation factor P family.

The chain is Elongation factor P-like protein from Xylella fastidiosa (strain 9a5c).